A 256-amino-acid chain; its full sequence is Hydroxyacylglutathione hydrolase (256 aa).

7 residues coordinate Zn(2+): His53, His55, Asp57, His58, His113, Asp130, and His168.

Belongs to the metallo-beta-lactamase superfamily. Glyoxalase II family. As to quaternary structure, monomer. Zn(2+) is required as a cofactor.

It catalyses the reaction an S-(2-hydroxyacyl)glutathione + H2O = a 2-hydroxy carboxylate + glutathione + H(+). It functions in the pathway secondary metabolite metabolism; methylglyoxal degradation; (R)-lactate from methylglyoxal: step 2/2. Thiolesterase that catalyzes the hydrolysis of S-D-lactoyl-glutathione to form glutathione and D-lactic acid. This chain is Hydroxyacylglutathione hydrolase, found in Tolumonas auensis (strain DSM 9187 / NBRC 110442 / TA 4).